A 421-amino-acid polypeptide reads, in one-letter code: Fasciclin-like arabinogalactan protein ARB_02922 (421 aa).

The N-terminal stretch at 1–17 (MLLYYILVALWATVTYA) is a signal peptide. FAS1 domains are found at residues 18-167 (KSFS…DRPL) and 169-296 (LPQS…SDVL). 8 N-linked (GlcNAc...) asparagine glycosylation sites follow: Asn52, Asn75, Asn80, Asn120, Asn145, Asn181, Asn223, and Asn300. Residues 300–401 (NDTAKPVPNA…NTPQPGAAAT (102 aa)) form a disordered region. 2 stretches are compositionally biased toward gly residues: residues 344-356 (TSGG…GGGE) and 372-387 (SGGG…GGPG). A compositionally biased stretch (low complexity) spans 388 to 401 (PTATNTPQPGAAAT). A lipid anchor (GPI-anchor amidated glycine) is attached at Gly397. A propeptide spans 398–421 (AAATERAKAGLAAVVGLGVVLINA) (removed in mature form).

Belongs to the fasciclin-like AGP family.

The protein resides in the cell membrane. In terms of biological role, may be a cell surface adhesion protein. This is Fasciclin-like arabinogalactan protein ARB_02922 from Arthroderma benhamiae (strain ATCC MYA-4681 / CBS 112371) (Trichophyton mentagrophytes).